Reading from the N-terminus, the 366-residue chain is Galactoside alpha-(1,2)-fucosyltransferase 1 (366 aa).

Topologically, residues 1 to 8 are cytoplasmic; sequence MWPPSHRQ. Residues 9 to 25 traverse the membrane as a helical; Signal-anchor for type II membrane protein segment; sequence LCLAFLLVCVLSVISFF. Over 26 to 366 the chain is Lumenal; sequence LHIHQDSFPH…LSSLWTLAKP (341 aa). Residues asparagine 66, asparagine 302, and asparagine 328 are each glycosylated (N-linked (GlcNAc...) asparagine).

This sequence belongs to the glycosyltransferase 11 family.

It localises to the golgi apparatus. It is found in the golgi stack membrane. The enzyme catalyses a beta-D-galactosyl-(1-&gt;4)-N-acetyl-beta-D-glucosaminyl derivative + GDP-beta-L-fucose = an alpha-L-Fuc-(1-&gt;2)-beta-D-Gal-(1-&gt;4)-beta-D-GlcNAc derivative + GDP + H(+). It carries out the reaction a ganglioside GA1 + GDP-beta-L-fucose = a ganglioside Fuc-GA1 + GDP + H(+). The catalysed reaction is a beta-D-Gal-(1-&gt;3)-beta-D-GlcNAc-(1-&gt;3)-beta-D-Gal-(1-&gt;4)-beta-D-Glc-(1&lt;-&gt;1')-Cer(d18:1(4E)) + GDP-beta-L-fucose = alpha-L-fucosyl-(1-&gt;2)- beta-D-galactosyl-(1-&gt;3)-N-acetyl-beta-D-glucosaminyl-(1-&gt;3)-beta-D-galactosyl-(1-&gt;4)-beta-D-glucosyl-(1&lt;-&gt;1')-N-acylsphing-4-enine + GDP + H(+). It catalyses the reaction a neolactoside nLc4Cer(d18:1(4E)) + GDP-beta-L-fucose = a neolactoside IV(2)-alpha-Fuc-nLc4Cer(d18:1(4E)) + GDP + H(+). The enzyme catalyses a ganglioside GM1 + GDP-beta-L-fucose = a ganglioside Fuc-GM1 + GDP + H(+). It carries out the reaction beta-D-galactosyl-(1-&gt;3)-N-acetyl-D-galactosamine + GDP-beta-L-fucose = alpha-L-fucosyl-(1-&gt;2)-beta-D-galactosyl-(1-&gt;3)-N-acetyl-D-galactosamine + GDP + H(+). The protein operates within protein modification; protein glycosylation. In terms of biological role, catalyzes the transfer of L-fucose, from a guanosine diphosphate-beta-L-fucose, to the terminal galactose residue of glycoconjugates through an alpha(1,2) linkage leading to H antigen synthesis that is an intermediate substrate in the synthesis of ABO blood group antigens. H antigen is essential for maturation of the glomerular layer of the main olfactory bulb, in cell migration and early cell-cell contacts during tumor associated angiogenesis. Preferentially fucosylates soluble lactose and to a lesser extent fucosylates glycolipids gangliosides GA1 and GM1a. The polypeptide is Galactoside alpha-(1,2)-fucosyltransferase 1 (Pan troglodytes (Chimpanzee)).